Here is a 142-residue protein sequence, read N- to C-terminus: Large ribosomal subunit protein uL13 (142 aa).

It belongs to the universal ribosomal protein uL13 family. In terms of assembly, part of the 50S ribosomal subunit.

This protein is one of the early assembly proteins of the 50S ribosomal subunit, although it is not seen to bind rRNA by itself. It is important during the early stages of 50S assembly. This chain is Large ribosomal subunit protein uL13, found in Alkalilimnicola ehrlichii (strain ATCC BAA-1101 / DSM 17681 / MLHE-1).